The sequence spans 359 residues: Membrane-bound lytic murein transglycosylase C (359 aa).

Positions 1-16 (MKKVLALALIAPLLIS) are cleaved as a signal peptide. Cysteine 17 carries N-palmitoyl cysteine lipidation. A lipid anchor (S-diacylglycerol cysteine) is attached at cysteine 17.

This sequence belongs to the transglycosylase Slt family.

The protein resides in the cell outer membrane. It carries out the reaction Exolytic cleavage of the (1-&gt;4)-beta-glycosidic linkage between N-acetylmuramic acid (MurNAc) and N-acetylglucosamine (GlcNAc) residues in peptidoglycan, from either the reducing or the non-reducing ends of the peptidoglycan chains, with concomitant formation of a 1,6-anhydrobond in the MurNAc residue.. In terms of biological role, murein-degrading enzyme. May play a role in recycling of muropeptides during cell elongation and/or cell division. The sequence is that of Membrane-bound lytic murein transglycosylase C from Edwardsiella ictaluri (strain 93-146).